The chain runs to 227 residues: Zinc finger protein ZAT10 (227 aa).

The C2H2-type 1 zinc finger occupies 80–102 (YKCSVCDKTFSSYQALGGHKASH). The tract at residues 96–128 (GGHKASHRKNLSQTLSGGGDDHSTSSATTTSAV) is disordered. Over residues 119-128 (TSSATTTSAV) the composition is skewed to low complexity. Residues 136 to 158 (HVCTICNKSFPSGQALGGHKRCH) form a C2H2-type 2 zinc finger. The disordered stretch occupies residues 168 to 189 (SSVSNSEGAGSTSHVSSSHRGF). Polar residues predominate over residues 174–186 (EGAGSTSHVSSSH).

As to expression, expressed in roots, stems and leaves.

It is found in the nucleus. Transcriptional repressor involved in abiotic stress responses. Can repress the stress responsive genes DREB1A and LTI78. Probably involved in jasmonate (JA) early signaling response. May regulate the expression of the JA biosynthesis gene LOX3 and control the expression of TIFY10A/JAZ1, a key repressor in the JA signaling cascade. The sequence is that of Zinc finger protein ZAT10 (ZAT10) from Arabidopsis thaliana (Mouse-ear cress).